Here is a 269-residue protein sequence, read N- to C-terminus: UPF0162 protein BU173 (269 aa).

It belongs to the UPF0162 family.

In Buchnera aphidicola subsp. Acyrthosiphon pisum (strain APS) (Acyrthosiphon pisum symbiotic bacterium), this protein is UPF0162 protein BU173.